Consider the following 570-residue polypeptide: MFS-type transporter ptmT (570 aa).

Residues Met-1–Thr-11 show a composition bias toward polar residues. The disordered stretch occupies residues Met-1–Gln-34. The next 14 helical transmembrane spans lie at Gly-50–Leu-70, Trp-94–Tyr-114, Trp-121–Pro-141, Ala-151–Ile-171, Ala-182–Phe-202, Trp-210–Met-230, Gly-247–Leu-267, Asn-278–Ile-298, Ile-323–Phe-343, Ile-356–Ile-376, Val-379–Leu-399, Ile-413–Val-433, Val-445–Ala-465, and Val-517–Ile-537. The N-linked (GlcNAc...) asparagine glycan is linked to Asn-541. Residues Pro-550–Thr-570 are disordered. Residues Gly-561 to Thr-570 are compositionally biased toward basic and acidic residues.

Belongs to the major facilitator superfamily. TCR/Tet family.

The protein localises to the cell membrane. MFS-type transporter; part of the gene cluster that mediates the biosynthesis of the indole diterpenes penitrems. May be involved in the efflux of penitrems. The sequence is that of MFS-type transporter ptmT from Penicillium ochrochloron.